A 126-amino-acid polypeptide reads, in one-letter code: Large ribosomal subunit protein uL22 (126 aa).

This sequence belongs to the universal ribosomal protein uL22 family. Part of the 50S ribosomal subunit.

In terms of biological role, this protein binds specifically to 23S rRNA; its binding is stimulated by other ribosomal proteins, e.g. L4, L17, and L20. It is important during the early stages of 50S assembly. It makes multiple contacts with different domains of the 23S rRNA in the assembled 50S subunit and ribosome. Its function is as follows. The globular domain of the protein is located near the polypeptide exit tunnel on the outside of the subunit, while an extended beta-hairpin is found that lines the wall of the exit tunnel in the center of the 70S ribosome. The chain is Large ribosomal subunit protein uL22 from Maricaulis maris (strain MCS10) (Caulobacter maris).